Consider the following 489-residue polypeptide: Tyrosine-protein phosphatase MSG5 (489 aa).

A compositionally biased stretch (basic and acidic residues) spans 1–18 (MQFHSDKQHLDSKTDIDF). The tract at residues 1-30 (MQFHSDKQHLDSKTDIDFKPNSPRSLQNRN) is disordered. Residues Ser-22, Ser-98, and Ser-151 each carry the phosphoserine modification. Thr-178 is subject to Phosphothreonine. The Tyrosine-protein phosphatase domain maps to 233–375 (GPLLVLPPNL…LMEWGTMLSK (143 aa)). Cys-319 acts as the Phosphocysteine intermediate in catalysis. Disordered stretches follow at residues 375–401 (KNSP…VSST) and 419–489 (LSSS…MFLP). Low complexity predominate over residues 419–450 (LSSSPNDSSVNSSEVTPRTPATLTGARTALAT). Over residues 451–460 (ERGEDDEHCK) the composition is skewed to basic and acidic residues.

The protein belongs to the protein-tyrosine phosphatase family. Non-receptor class dual specificity subfamily.

The enzyme catalyses O-phospho-L-tyrosyl-[protein] + H2O = L-tyrosyl-[protein] + phosphate. Its function is as follows. Dual specificity phosphatase that dephosphorylates MAP kinase FUS3 on both a Tyr and a Ser or Thr. Has a role in adaptation to pheromone. This is Tyrosine-protein phosphatase MSG5 (MSG5) from Saccharomyces cerevisiae (strain ATCC 204508 / S288c) (Baker's yeast).